A 3038-amino-acid polypeptide reads, in one-letter code: Lovastatin nonaketide synthase, polyketide synthase component (3038 aa).

Residues N8–E447 form the Ketosynthase family 3 (KS3) domain. Active-site for beta-ketoacyl synthase activity residues include C181, H320, and H367. The interval I562–R889 is malonyl-CoA:ACP transacylase (MAT) domain. S656 acts as the For malonyltransferase activity in catalysis. Positions A695–R757 are lovC-binding. The tract at residues H953–V1089 is N-terminal hotdog fold. The tract at residues H953–P1263 is dehydratase (DH) domain. The region spanning H953–S1267 is the PKS/mFAS DH domain. H985 serves as the catalytic Proton acceptor; for dehydratase activity. The tract at residues E1107–S1267 is C-terminal hotdog fold. D1174 functions as the Proton donor; for dehydratase activity in the catalytic mechanism. The methyltransferase (CMet) domain stretch occupies residues L1443–Q1543. The interval T2139–A2437 is ketoreductase (KR) domain. The 76-residue stretch at Q2463 to L2538 folds into the Carrier domain. An O-(pantetheine 4'-phosphoryl)serine modification is found at S2498. Positions V2546–P2602 are disordered. Positions S2583 to E2594 are enriched in acidic residues. Residues P2602 to L2952 form an inactive Condensation domain region.

In terms of assembly, homodimer. Each MAT domain from the lovB homodimer binds one lovC molecule to form the final active lovB-lovC megasynthase complex. It depends on pantetheine 4'-phosphate as a cofactor.

The catalysed reaction is holo-[lovastatin nonaketide synthase] + 9 malonyl-CoA + S-adenosyl-L-methionine + 11 NADPH + 19 H(+) = dihydromonacolin L-[lovastatin nonaketide synthase] + S-adenosyl-L-homocysteine + 9 CO2 + 11 NADP(+) + 9 CoA + 6 H2O. It participates in polyketide biosynthesis; lovastatin biosynthesis. In terms of biological role, lovastatin nonaketide synthase; part of the gene cluster that mediates the biosynthesis of lovastatin (also known as mevinolin, mevacor or monacolin K), a hypolipidemic inhibitor of (3S)-hydroxymethylglutaryl-coenzyme A (HMG-CoA) reductase (HMGR). The first step in the biosynthesis of lovastatin is the production of dihydromonacolin L acid by the lovastatin nonaketide synthase lovB and the trans-acting enoyl reductase lovC (called the lovB-lovC megasynthase complex) via condensation of one acetyl-CoA unit and 8 malonyl-CoA units. Dihydromonacolin L acid is released from lovB by the thioesterase lovG. Next, dihydromonacolin L acid is oxidized by the dihydromonacolin L monooxygenase lovA twice to form monacolin J acid. The 2-methylbutyrate moiety of lovastatin is synthesized by the lovastatin diketide synthase lovF via condensation of one acetyl-CoA unit and one malonyl-CoA unit. Finally, the covalent attachment of this moiety to monacolin J acid is catalyzed by the transesterase lovD to yield lovastatin. LovD has broad substrate specificity and can also convert monacolin J to simvastatin using alpha-dimethylbutanoyl-S-methyl-3-mercaptopropionate (DMB-S-MMP) as the thioester acyl donor, and can also catalyze the reverse reaction and function as hydrolase in vitro. LovD has much higher activity with LovF-bound 2-methylbutanoate than with free diketide substrates. This is Lovastatin nonaketide synthase, polyketide synthase component (lovB) from Aspergillus terreus (strain NIH 2624 / FGSC A1156).